We begin with the raw amino-acid sequence, 267 residues long: Hydroxyethylthiazole kinase (267 aa).

Met-46 lines the substrate pocket. ATP contacts are provided by Arg-121 and Thr-167. Ala-194 is a substrate binding site.

It belongs to the Thz kinase family. Mg(2+) is required as a cofactor.

It carries out the reaction 5-(2-hydroxyethyl)-4-methylthiazole + ATP = 4-methyl-5-(2-phosphooxyethyl)-thiazole + ADP + H(+). It participates in cofactor biosynthesis; thiamine diphosphate biosynthesis; 4-methyl-5-(2-phosphoethyl)-thiazole from 5-(2-hydroxyethyl)-4-methylthiazole: step 1/1. In terms of biological role, catalyzes the phosphorylation of the hydroxyl group of 4-methyl-5-beta-hydroxyethylthiazole (THZ). The chain is Hydroxyethylthiazole kinase from Rhizobium johnstonii (strain DSM 114642 / LMG 32736 / 3841) (Rhizobium leguminosarum bv. viciae).